A 408-amino-acid chain; its full sequence is Tryptophan synthase beta chain (408 aa).

K103 bears the N6-(pyridoxal phosphate)lysine mark.

The protein belongs to the TrpB family. As to quaternary structure, tetramer of two alpha and two beta chains. The cofactor is pyridoxal 5'-phosphate.

The enzyme catalyses (1S,2R)-1-C-(indol-3-yl)glycerol 3-phosphate + L-serine = D-glyceraldehyde 3-phosphate + L-tryptophan + H2O. It functions in the pathway amino-acid biosynthesis; L-tryptophan biosynthesis; L-tryptophan from chorismate: step 5/5. The beta subunit is responsible for the synthesis of L-tryptophan from indole and L-serine. This Koribacter versatilis (strain Ellin345) protein is Tryptophan synthase beta chain.